The chain runs to 472 residues: Uronate isomerase (472 aa).

The protein belongs to the metallo-dependent hydrolases superfamily. Uronate isomerase family.

It catalyses the reaction D-glucuronate = D-fructuronate. It carries out the reaction aldehydo-D-galacturonate = keto-D-tagaturonate. The protein operates within carbohydrate metabolism; pentose and glucuronate interconversion. This Nostoc punctiforme (strain ATCC 29133 / PCC 73102) protein is Uronate isomerase.